We begin with the raw amino-acid sequence, 117 residues long: uncharacterized protein (117 aa).

Residues methionine 1–serine 22 form the signal peptide.

This is an uncharacterized protein from Escherichia coli O6:H1 (strain CFT073 / ATCC 700928 / UPEC).